The primary structure comprises 365 residues: Holliday junction branch migration complex subunit RuvB (365 aa).

Positions 1–10 are enriched in polar residues; that stretch reads MAIVSSNAAS. Residues 1-48 are disordered; it reads MAIVSSNAASQRPRPDRGPDRVPNRVVDGARQAEDDRDPGRVGAKEDS. Composition is skewed to basic and acidic residues over residues 13–23 and 31–48; these read PRPDRGPDRVP and RQAE…KEDS. Residues 13–210 are large ATPase domain (RuvB-L); it reads PRPDRGPDRV…FGLIQRLEFY (198 aa). Residues Leu-49, Arg-50, Gly-91, Lys-94, Thr-95, Thr-96, Arg-200, Tyr-210, and Arg-247 each contribute to the ATP site. Mg(2+) is bound at residue Thr-95. A small ATPAse domain (RuvB-S) region spans residues 211–282; it reads GLEDLQAIVE…LVDEALTLHR (72 aa). Residues 285-365 form a head domain (RuvB-H) region; it reads GRGLDASDRR…GWPYPQEQAA (81 aa). DNA-binding residues include Arg-340 and Arg-345.

Belongs to the RuvB family. Homohexamer. Forms an RuvA(8)-RuvB(12)-Holliday junction (HJ) complex. HJ DNA is sandwiched between 2 RuvA tetramers; dsDNA enters through RuvA and exits via RuvB. An RuvB hexamer assembles on each DNA strand where it exits the tetramer. Each RuvB hexamer is contacted by two RuvA subunits (via domain III) on 2 adjacent RuvB subunits; this complex drives branch migration. In the full resolvosome a probable DNA-RuvA(4)-RuvB(12)-RuvC(2) complex forms which resolves the HJ.

It is found in the cytoplasm. It catalyses the reaction ATP + H2O = ADP + phosphate + H(+). In terms of biological role, the RuvA-RuvB-RuvC complex processes Holliday junction (HJ) DNA during genetic recombination and DNA repair, while the RuvA-RuvB complex plays an important role in the rescue of blocked DNA replication forks via replication fork reversal (RFR). RuvA specifically binds to HJ cruciform DNA, conferring on it an open structure. The RuvB hexamer acts as an ATP-dependent pump, pulling dsDNA into and through the RuvAB complex. RuvB forms 2 homohexamers on either side of HJ DNA bound by 1 or 2 RuvA tetramers; 4 subunits per hexamer contact DNA at a time. Coordinated motions by a converter formed by DNA-disengaged RuvB subunits stimulates ATP hydrolysis and nucleotide exchange. Immobilization of the converter enables RuvB to convert the ATP-contained energy into a lever motion, pulling 2 nucleotides of DNA out of the RuvA tetramer per ATP hydrolyzed, thus driving DNA branch migration. The RuvB motors rotate together with the DNA substrate, which together with the progressing nucleotide cycle form the mechanistic basis for DNA recombination by continuous HJ branch migration. Branch migration allows RuvC to scan DNA until it finds its consensus sequence, where it cleaves and resolves cruciform DNA. The protein is Holliday junction branch migration complex subunit RuvB of Synechococcus sp. (strain WH7803).